Consider the following 120-residue polypeptide: Large ribosomal subunit protein uL18 (120 aa).

Residues 1–23 (MKLSRKESVRRRHQRVRRKINGT) form a disordered region. The segment covering 8 to 20 (SVRRRHQRVRRKI) has biased composition (basic residues).

This sequence belongs to the universal ribosomal protein uL18 family. In terms of assembly, part of the 50S ribosomal subunit; part of the 5S rRNA/L5/L18/L25 subcomplex. Contacts the 5S and 23S rRNAs.

In terms of biological role, this is one of the proteins that bind and probably mediate the attachment of the 5S RNA into the large ribosomal subunit, where it forms part of the central protuberance. This is Large ribosomal subunit protein uL18 from Microcystis aeruginosa (strain NIES-843 / IAM M-2473).